Here is a 1133-residue protein sequence, read N- to C-terminus: DNA-directed RNA polymerase III subunit RPC2 (1133 aa).

Lys186 is a binding site for RNA. Arg195 provides a ligand contact to DNA. Residue Arg213 coordinates RNA. A DNA-binding site is contributed by Asp432. Gln438 and Gln692 together coordinate RNA. Asp753 is a binding site for Mg(2+). RNA contacts are provided by Lys896, Lys904, and Lys1019. DNA is bound by residues Arg1039, Ser1040, and Arg1046. Positions 1080, 1083, 1092, and 1095 each coordinate Zn(2+). The C4-type zinc finger occupies Cys1080–Cys1095.

This sequence belongs to the RNA polymerase beta chain family. As to quaternary structure, component of the RNA polymerase III (Pol III) complex consisting of 17 subunits: a ten-subunit catalytic core composed of POLR3A/RPC1, POLR3B/RPC2, POLR1C/RPAC1, POLR1D/RPAC2, POLR3K/RPC10, POLR2E/RPABC1, POLR2F/RPABC2, POLR2H/RPABC3, POLR2K/RPABC4 and POLR2L/RPABC5; a mobile stalk composed of two subunits POLR3H/RPC8 and CRCP/RPC9, protruding from the core and functioning primarily in transcription initiation; and additional subunits homologous to general transcription factors of the RNA polymerase II machinery, POLR3C/RPC3-POLR3F/RPC6-POLR3G/RPC7 heterotrimer required for transcription initiation and POLR3D/RPC4-POLR3E/RPC5 heterodimer involved in both transcription initiation and termination. The cofactor is Mg(2+).

Its subcellular location is the nucleus. The protein resides in the cytoplasm. It localises to the cytosol. It carries out the reaction RNA(n) + a ribonucleoside 5'-triphosphate = RNA(n+1) + diphosphate. Its function is as follows. Catalytic core component of RNA polymerase III (Pol III), a DNA-dependent RNA polymerase which synthesizes small non-coding RNAs using the four ribonucleoside triphosphates as substrates. Synthesizes 5S rRNA, snRNAs, tRNAs and miRNAs from at least 500 distinct genomic loci. Pol III-mediated transcription cycle proceeds through transcription initiation, transcription elongation and transcription termination stages. During transcription initiation, Pol III is recruited to DNA promoters type I, II or III with the help of general transcription factors and other specific initiation factors. Once the polymerase has escaped from the promoter it enters the elongation phase during which RNA is actively polymerized, based on complementarity with the template DNA strand. Transcription termination involves the release of the RNA transcript and polymerase from the DNA. Forms Pol III active center together with the largest subunit POLR3A/RPC1. A single-stranded DNA template strand of the promoter is positioned within the central active site cleft of Pol III. Appends one nucleotide at a time to the 3' end of the nascent RNA, with POLR3A/RPC1 contributing a Mg(2+)-coordinating DxDGD motif, and POLR3B/RPC2 participating in the coordination of a second Mg(2+) ion and providing lysine residues believed to facilitate Watson-Crick base pairing between the incoming nucleotide and template base. Typically, Mg(2+) ions direct a 5' nucleoside triphosphate to form a phosphodiester bond with the 3' hydroxyl of the preceding nucleotide of the nascent RNA, with the elimination of pyrophosphate. Pol III plays a key role in sensing and limiting infection by intracellular bacteria and DNA viruses. Acts as a nuclear and cytosolic DNA sensor involved in innate immune response. Can sense non-self dsDNA that serves as template for transcription into dsRNA. The non-self RNA polymerase III transcripts, such as Epstein-Barr virus-encoded RNAs (EBERs) induce type I interferon and NF-kappa-B through the RIG-I pathway. The chain is DNA-directed RNA polymerase III subunit RPC2 from Homo sapiens (Human).